The following is a 61-amino-acid chain: Large ribosomal subunit protein bL32 (61 aa).

Positions 1-44 (MAVQQNRKSRSRRDMRRSHDALTENALTVDQATGETHRRHHVTK) are disordered. Basic residues predominate over residues 7 to 16 (RKSRSRRDMR). Residues 25–34 (NALTVDQATG) show a composition bias toward polar residues.

Belongs to the bacterial ribosomal protein bL32 family.

In Acinetobacter baumannii (strain AB307-0294), this protein is Large ribosomal subunit protein bL32.